Reading from the N-terminus, the 68-residue chain is MAVQQNKVSKSRRNNRRAHDSLVAANPNECTNCGELKRPHHICAACGHYDDKEVVALTEEIDLEDDAA.

Residues 1–21 (MAVQQNKVSKSRRNNRRAHDS) form a disordered region.

The protein belongs to the bacterial ribosomal protein bL32 family.

The sequence is that of Large ribosomal subunit protein bL32 from Roseobacter denitrificans (strain ATCC 33942 / OCh 114) (Erythrobacter sp. (strain OCh 114)).